We begin with the raw amino-acid sequence, 389 residues long: Formate-dependent phosphoribosylglycinamide formyltransferase (389 aa).

N(1)-(5-phospho-beta-D-ribosyl)glycinamide contacts are provided by residues 15-16 (EL) and Glu-75. ATP contacts are provided by residues Arg-107, Lys-148, 153–158 (SSGKGQ), 188–191 (EEFL), and Glu-196. One can recognise an ATP-grasp domain in the interval 112–302 (DLAAGELALR…EFELHLRAVL (191 aa)). 2 residues coordinate Mg(2+): Glu-261 and Glu-273. N(1)-(5-phospho-beta-D-ribosyl)glycinamide is bound by residues Asp-280, Lys-350, and 357 to 358 (RR).

Belongs to the PurK/PurT family. As to quaternary structure, homodimer.

The catalysed reaction is N(1)-(5-phospho-beta-D-ribosyl)glycinamide + formate + ATP = N(2)-formyl-N(1)-(5-phospho-beta-D-ribosyl)glycinamide + ADP + phosphate + H(+). It functions in the pathway purine metabolism; IMP biosynthesis via de novo pathway; N(2)-formyl-N(1)-(5-phospho-D-ribosyl)glycinamide from N(1)-(5-phospho-D-ribosyl)glycinamide (formate route): step 1/1. Functionally, involved in the de novo purine biosynthesis. Catalyzes the transfer of formate to 5-phospho-ribosyl-glycinamide (GAR), producing 5-phospho-ribosyl-N-formylglycinamide (FGAR). Formate is provided by PurU via hydrolysis of 10-formyl-tetrahydrofolate. The protein is Formate-dependent phosphoribosylglycinamide formyltransferase of Synechococcus sp. (strain WH7803).